A 186-amino-acid polypeptide reads, in one-letter code: Mitoferrin-2B (186 aa).

The Solcar repeat unit spans residues 75–163 (SNVTAHMLAG…FACYEKLKKT (89 aa)). Transmembrane regions (helical) follow at residues 77–96 (VTAH…CLMY), 137–157 (RGLN…FACY), and 172–185 (GNCH…NSCP).

This sequence belongs to the mitochondrial carrier (TC 2.A.29) family.

The protein localises to the mitochondrion inner membrane. It carries out the reaction Fe(2+)(in) = Fe(2+)(out). Its function is as follows. Mitochondrial iron transporter that mediates iron uptake. Probably required for heme synthesis of hemoproteins and Fe-S cluster assembly in non-erythroid cells. This Xenopus laevis (African clawed frog) protein is Mitoferrin-2B (slc25a28-b).